Consider the following 77-residue polypeptide: Acyl carrier protein (77 aa).

The region spanning 2–77 is the Carrier domain; that stretch reads SDIADRVKKI…DAVKFISEAA (76 aa). O-(pantetheine 4'-phosphoryl)serine is present on serine 37.

It belongs to the acyl carrier protein (ACP) family. 4'-phosphopantetheine is transferred from CoA to a specific serine of apo-ACP by AcpS. This modification is essential for activity because fatty acids are bound in thioester linkage to the sulfhydryl of the prosthetic group.

The protein resides in the cytoplasm. It functions in the pathway lipid metabolism; fatty acid biosynthesis. Carrier of the growing fatty acid chain in fatty acid biosynthesis. The protein is Acyl carrier protein of Cereibacter sphaeroides (strain ATCC 17029 / ATH 2.4.9) (Rhodobacter sphaeroides).